Reading from the N-terminus, the 463-residue chain is Glutamate--tRNA ligase 1 (463 aa).

The short motif at 10-20 (PSPTGYLHIGG) is the 'HIGH' region element. A 'KMSKS' region motif is present at residues 238-242 (KLSKR). ATP is bound at residue lysine 241.

Belongs to the class-I aminoacyl-tRNA synthetase family. Glutamate--tRNA ligase type 1 subfamily. Monomer.

It localises to the cytoplasm. It catalyses the reaction tRNA(Glu) + L-glutamate + ATP = L-glutamyl-tRNA(Glu) + AMP + diphosphate. Functionally, catalyzes the attachment of glutamate to tRNA(Glu) in a two-step reaction: glutamate is first activated by ATP to form Glu-AMP and then transferred to the acceptor end of tRNA(Glu). In Helicobacter pylori (strain G27), this protein is Glutamate--tRNA ligase 1.